We begin with the raw amino-acid sequence, 209 residues long: Ribonuclease HII (209 aa).

Positions 19–208 constitute an RNase H type-2 domain; that stretch reads GLVAGVDEAG…VARALQAPVA (190 aa). A divalent metal cation is bound by residues D25, E26, and D117.

It belongs to the RNase HII family. Mn(2+) is required as a cofactor. Mg(2+) serves as cofactor.

The protein localises to the cytoplasm. The enzyme catalyses Endonucleolytic cleavage to 5'-phosphomonoester.. In terms of biological role, endonuclease that specifically degrades the RNA of RNA-DNA hybrids. This chain is Ribonuclease HII, found in Acidovorax ebreus (strain TPSY) (Diaphorobacter sp. (strain TPSY)).